A 349-amino-acid chain; its full sequence is MAELLAIKWDDNRDKLILLDQTILPNKIEYIEYDTAEGVYDSIKDMIVRGAPAIGVTAAYGLYFAAKVAPEDNFENFFKYLKEKSAYLDSSRPTAVNLSWALKIMESKALENKDKDVKEIKGILREEAKRIHEEDIEICKAIGENLITLLKDGVGILTHCNAGQLATSKYGTATSPMYLAKEKGWNFKVYSDETRPRLQGSTLTALELYEAGIDVTTITDNMAAMVMSQDKIDAVIVGCDRIAANGDTANKIGTMGVSILAKYFGIPMYIAAPTPSIDINTKTGKDIPIEERNSEEVTSRFGVWTAPKGVKVYNPGFDVTPHENITAIVTEKGIVYPPFEENLKKLFEK.

Residues 49 to 51 (RGA), R92, and Q199 each bind substrate. The active-site Proton donor is D240. Residue 250–251 (NK) participates in substrate binding.

This sequence belongs to the EIF-2B alpha/beta/delta subunits family. DrdI subfamily.

The catalysed reaction is 5-deoxy-alpha-D-ribose 1-phosphate = 5-deoxy-D-ribulose 1-phosphate. Its pathway is carbohydrate degradation. Its function is as follows. Catalyzes the isomerization of 5-deoxy-alpha-D-ribose 1-phosphate to 5-deoxy-D-ribulose 1-phosphate, as part of a 5-deoxyribose salvage pathway that recycles this toxic radical SAM enzyme by-product to mainstream metabolites. The chain is 5-deoxyribose 1-phosphate isomerase from Clostridium botulinum (strain 657 / Type Ba4).